The following is a 166-amino-acid chain: MDEKQLYKHIITKSTNTCVKFTPRDITKITDYVYLGNYRNVIELPNKTFFKYIVNVSMLKYKLKRTDITVLHFPLEDNDTVSISKHIDAVTYVLKKCESLKIPVLVHCMAGINRSSAMIMGYLMEIRDKNIPFVIYFLYIYHELKYIRGAFIENKSFLNQIIDKYI.

In terms of domain architecture, Tyrosine-protein phosphatase spans 25 to 166; sequence DITKITDYVY…FLNQIIDKYI (142 aa). Residue cysteine 108 is the Phosphocysteine intermediate of the active site.

Belongs to the protein-tyrosine phosphatase family. Non-receptor class dual specificity subfamily. As to quaternary structure, homodimer.

It is found in the virion. The protein resides in the host cytoplasm. It carries out the reaction O-phospho-L-tyrosyl-[protein] + H2O = L-tyrosyl-[protein] + phosphate. It catalyses the reaction O-phospho-L-seryl-[protein] + H2O = L-seryl-[protein] + phosphate. Its function is as follows. Serine/Tyrosine phosphatase which down-regulates cellular antiviral response by dephosphorylating activated STAT1 and blocking interferon (IFN)-stimulated innate immune responses. This Vertebrata (FPV) protein is Probable dual specificity protein phosphatase H1 homolog.